The sequence spans 89 residues: Small ribosomal subunit protein uS19 (89 aa).

The protein belongs to the universal ribosomal protein uS19 family.

Protein S19 forms a complex with S13 that binds strongly to the 16S ribosomal RNA. This chain is Small ribosomal subunit protein uS19, found in Bacteroides fragilis (strain YCH46).